The chain runs to 309 residues: Protein FdhE (309 aa).

This sequence belongs to the FdhE family.

The protein resides in the cytoplasm. Functionally, necessary for formate dehydrogenase activity. In Salmonella dublin (strain CT_02021853), this protein is Protein FdhE.